The following is a 248-amino-acid chain: Probable transcriptional regulatory protein RPA1097 (248 aa).

Residues 1–21 (MAGHSQFKNIMHRKGRQDAQR) form a disordered region.

This sequence belongs to the TACO1 family.

Its subcellular location is the cytoplasm. The polypeptide is Probable transcriptional regulatory protein RPA1097 (Rhodopseudomonas palustris (strain ATCC BAA-98 / CGA009)).